Consider the following 152-residue polypeptide: Large ribosomal subunit protein uL13 (152 aa).

Residues 129-152 are disordered; that stretch reads EHPHEAQSPEVLDVKSMNKKNTRS.

This sequence belongs to the universal ribosomal protein uL13 family. As to quaternary structure, part of the 50S ribosomal subunit.

Its function is as follows. This protein is one of the early assembly proteins of the 50S ribosomal subunit, although it is not seen to bind rRNA by itself. It is important during the early stages of 50S assembly. This chain is Large ribosomal subunit protein uL13, found in Ruegeria sp. (strain TM1040) (Silicibacter sp.).